A 281-amino-acid polypeptide reads, in one-letter code: Ribonuclease HII (281 aa).

Residues 1–46 (MIRDTKQPIKVPAKPASRSGGKAKTVKPKTIKPKTSAKAAAAKPAS) form a disordered region. The segment covering 33-46 (PKTSAKAAAAKPAS) has biased composition (low complexity). An RNase H type-2 domain is found at 73 to 261 (WPIAGCDEAG…VAAAWQKIEG (189 aa)). 3 residues coordinate a divalent metal cation: Asp79, Glu80, and Asp170.

The protein belongs to the RNase HII family. Mn(2+) serves as cofactor. Requires Mg(2+) as cofactor.

Its subcellular location is the cytoplasm. It catalyses the reaction Endonucleolytic cleavage to 5'-phosphomonoester.. In terms of biological role, endonuclease that specifically degrades the RNA of RNA-DNA hybrids. The sequence is that of Ribonuclease HII from Rhodopseudomonas palustris (strain TIE-1).